The following is a 242-amino-acid chain: ATP synthase subunit a (242 aa).

Transmembrane regions (helical) follow at residues 29–49 (SSIYMLLASILALTYFYLAFY), 84–104 (FIPLIFSLFIFILFCNLLGMT), 114–134 (IIVTFTLAILVFLMVTIVGFV), 140–160 (FLTLFLPHGTPLWLAPLMIVI), 181–201 (MAGHVLLKVIAGFTVSLMIYL), and 203–223 (FLPIPIMVILIGFEIFVAILQ).

Belongs to the ATPase A chain family. In terms of assembly, F-type ATPases have 2 components, CF(1) - the catalytic core - and CF(0) - the membrane proton channel. CF(1) has five subunits: alpha(3), beta(3), gamma(1), delta(1), epsilon(1). CF(0) has three main subunits: a(1), b(2) and c(9-12). The alpha and beta chains form an alternating ring which encloses part of the gamma chain. CF(1) is attached to CF(0) by a central stalk formed by the gamma and epsilon chains, while a peripheral stalk is formed by the delta and b chains.

Its subcellular location is the cell membrane. Functionally, key component of the proton channel; it plays a direct role in the translocation of protons across the membrane. This is ATP synthase subunit a from Rickettsia africae (strain ESF-5).